The sequence spans 833 residues: Capsid-associated protein Vp91 (833 aa).

Positions 1-18 (MSGVVLLVLAIILITIFS) are cleaved as a signal peptide. Residues N137, N180, N199, and N210 are each glycosylated (N-linked (GlcNAc...) asparagine; by host). A C2HC BV-type zinc finger spans residues 147 to 196 (CVPEDPCSGRPPGRYPMNELLLDTLVHNQHSDKNYSAGAHLYHPTLYLRC). Intrachain disulfides connect C207–C220 and C260–C273. The Chitin-binding type-2 domain maps to 223 to 281 (NELCEGRPDGFVLPYFPEALLVNEFVECRNGEHVVAQCADGQVFDRALMTCVHAHPCAF). N-linked (GlcNAc...) asparagine; by host glycans are attached at residues N408, N413, N588, and N609. The interval 647–673 (EPGGDGDHWAPEVPPTQPEPELEPESE) is disordered.

It is found in the virion. Probable capsid-associated protein. This Choristoneura fumiferana nuclear polyhedrosis virus (CfMNPV) protein is Capsid-associated protein Vp91.